The sequence spans 272 residues: 27-O-demethylrifamycin SV methyltransferase (272 aa).

S-adenosyl-L-methionine is bound by residues serine 89, glutamine 94, 117-118 (DA), leucine 134, and histidine 139.

This sequence belongs to the class I-like SAM-binding methyltransferase superfamily. Exists probably as a trimer.

The enzyme catalyses 27-O-demethylrifamycin SV + S-adenosyl-L-methionine = rifamycin SV + S-adenosyl-L-homocysteine + H(+). Its pathway is antibiotic biosynthesis; rifamycin B biosynthesis. Slightly inhibited by Ca(2+) and Mg(2+). Strongly inhibited by Zn(2+), Ni(2+) and Co(2+). Catalyzes the methylation of 27-O-demethylrifamycin SV (DMRSV) to rifamycin SV. The sequence is that of 27-O-demethylrifamycin SV methyltransferase from Amycolatopsis mediterranei (strain S699) (Nocardia mediterranei).